A 189-amino-acid polypeptide reads, in one-letter code: 2-oxoglutarate synthase subunit KorC (189 aa).

In terms of assembly, heterotetramer of the KorA, KorB, KorC and KorD subunits.

It carries out the reaction 2 oxidized [2Fe-2S]-[ferredoxin] + 2-oxoglutarate + CoA = succinyl-CoA + 2 reduced [2Fe-2S]-[ferredoxin] + CO2 + H(+). This is 2-oxoglutarate synthase subunit KorC (korC) from Methanothermobacter thermautotrophicus (strain ATCC 29096 / DSM 1053 / JCM 10044 / NBRC 100330 / Delta H) (Methanobacterium thermoautotrophicum).